Reading from the N-terminus, the 301-residue chain is Large ribosomal subunit protein uL4 (301 aa).

A large ribosomal subunit protein uL4 region spans residues 1–223; it reads MNETKTIDVL…TQALSAQPEV (223 aa). The interval 49–105 is disordered; it reads QGTHATKTRGQVSGGGKKPWRQKGTGRARQGSTRAPQWVGGGTVHGPQPRSYAQRTP. The segment at 224–301 is unknown; sequence PETNVADQHP…KSDSEKEDAK (78 aa).

Belongs to the universal ribosomal protein uL4 family. As to quaternary structure, part of the 50S ribosomal subunit.

Its function is as follows. One of the primary rRNA binding proteins, this protein initially binds near the 5'-end of the 23S rRNA. It is important during the early stages of 50S assembly. It makes multiple contacts with different domains of the 23S rRNA in the assembled 50S subunit and ribosome. Forms part of the polypeptide exit tunnel. This is Large ribosomal subunit protein uL4 from Cutibacterium acnes (strain DSM 16379 / KPA171202) (Propionibacterium acnes).